The chain runs to 111 residues: ADIVMTQTPSSVSAAVGGTVTIKCQASESIGNELAWYQQKPGQPPKLLIYRASKLASGVSSRFKGSGSGTEFTLTISGVQCDDAGIYYCQQDWNSNNVVNNFGGGTEVVVK.

Residues 1–24 (ADIVMTQTPSSVSAAVGGTVTIKC) are framework-1. Residues 25-35 (QASESIGNELA) are complementarity-determining-1. The tract at residues 36–50 (WYQQKPGQPPKLLIY) is framework-2. The segment at 51–57 (RASKLAS) is complementarity-determining-2. The segment at 58–89 (GVSSRFKGSGSGTEFTLTISGVQCDDAGIYYC) is framework-3. The interval 90-101 (QQDWNSNNVVNN) is complementarity-determining-3. Residues 102–111 (FGGGTEVVVK) form a framework-4 region.

This is Ig kappa chain V region 3368 from Oryctolagus cuniculus (Rabbit).